We begin with the raw amino-acid sequence, 320 residues long: MNCFLFTLFFVAAPLATASYGSSSGGGGGGSSYLSSASSNGLDELVQAAAGGAQQAGGTITPANAEIPVSPAEVARLNQVQAQLQALNSNPVYRNLKNSDAIAESLAESSLASKIRQGNINIVAPNVIDQGVYRSLLVPSGQNNHQVIATQPLPPIIVNQPALPPTQIGGGPAAVVKAAPVIYKIKPSVIYQQEVINKVPTPLSLNPVYVKVYKPGKKIDAPLVPGVQQNYQAPSYGGSSYSAPAASYEPAPAPSYSAAPAQSYNAAPAPSYSAAPAASYGAAPSASYDAAPAASYGAESSYGSPQSSSSYGSAPPASGY.

The signal sequence occupies residues 1–18 (MNCFLFTLFFVAAPLATA). 5 consecutive repeat copies span residues 178 to 181 (AAPV), 258 to 261 (AAPA), 266 to 269 (AAPA), 274 to 277 (AAPA), and alanine 290. Positions 259–320 (APAQSYNAAP…YGSAPPASGY (62 aa)) are disordered.

Belongs to the chorion protein S36 family.

It is found in the secreted. In terms of biological role, chorion membrane (egg shell) protein; plays a role in protecting the egg from the environment. This chain is Chorion protein S36 (Cp36), found in Ceratitis capitata (Mediterranean fruit fly).